The chain runs to 600 residues: Elongation factor 4 (600 aa).

Residues 5–187 enclose the tr-type G domain; that stretch reads KYIRNFSIVA…EIVEKVPAPE (183 aa). GTP is bound by residues 17–22 and 134–137; these read DHGKST and NKVD.

Belongs to the TRAFAC class translation factor GTPase superfamily. Classic translation factor GTPase family. LepA subfamily.

Its subcellular location is the cell membrane. The catalysed reaction is GTP + H2O = GDP + phosphate + H(+). Its function is as follows. Required for accurate and efficient protein synthesis under certain stress conditions. May act as a fidelity factor of the translation reaction, by catalyzing a one-codon backward translocation of tRNAs on improperly translocated ribosomes. Back-translocation proceeds from a post-translocation (POST) complex to a pre-translocation (PRE) complex, thus giving elongation factor G a second chance to translocate the tRNAs correctly. Binds to ribosomes in a GTP-dependent manner. This is Elongation factor 4 from Clostridium perfringens (strain ATCC 13124 / DSM 756 / JCM 1290 / NCIMB 6125 / NCTC 8237 / Type A).